Here is a 473-residue protein sequence, read N- to C-terminus: MTMPESMLSESKLSGWAISPKLAQLASLAGHYADPEFSVAHGGHVRTIAAGHYTVSGLSRHVRLGEFVAHRSATGIHLGEVVRVEPDICYVCPIEPGEPIGIHDTVIRKGAFRVSPDESWCGRTINALGEPIDGQGPLASGIVRRSISNNAPPSMTRKRVETPFKTGVRAIDIFSPLCLGQRLGIFAGSGVGKSTLLSMLAKADAFDKVVIALVGERGREVREFIEDTMGDNMSKSVAVVATSDESPMLRKMAPLSAVTIAEHFRDQGDNVLLIIDSVTRFAHAIREVAVASGEPPVARGYPASVFTELPRLLERAGPGAEGTGTITAIVSILVDGDNHNDPIADSTRGILDGHIVLDRSLAEEGRYPPINPLASISRLAKKAWTPDQEKLVSRLKALVHRFEETRDLRLIGGYRPGTDPDLDMAVKQVPIIYETLKQLPDEPAAQDAYADLATALRGGAQNGQPQVNPRMRG.

An ATP-binding site is contributed by Ala187–Ser194.

It belongs to the ATPase alpha/beta chains family.

The protein resides in the cytoplasm. It catalyses the reaction ATP + H2O + 4 H(+)(in) = ADP + phosphate + 5 H(+)(out). In terms of biological role, probable catalytic subunit of a protein translocase for flagellum-specific export, or a proton translocase involved in local circuits at the flagellum. The protein is Flagellum-specific ATP synthase (fliI) of Agrobacterium fabrum (strain C58 / ATCC 33970) (Agrobacterium tumefaciens (strain C58)).